We begin with the raw amino-acid sequence, 174 residues long: Glyoxylase I 4 (174 aa).

Residues 13–135 (SLNHVSVLCR…DGFMIEICNC (123 aa)) form the VOC domain. Residue Glu131 is the Proton donor/acceptor of the active site.

Belongs to the glyoxalase I family. In terms of tissue distribution, mostly expressed in roots, and, to a lower extent, in leaves, flowers, seeds and siliques.

It localises to the cell membrane. The protein localises to the cytoplasm. Involved in the detoxification and scavenging of methylglyoxal (MG), a cytotoxic aldehyde produced in response to primary metabolism alteration observed during biotic and abiotic stresses. Modulates cross-talk between salicylic acid (SA) and jasmonic acid (JA) signaling pathways during defense responses to pathogens such as Botrytis cinerea. This Arabidopsis thaliana (Mouse-ear cress) protein is Glyoxylase I 4.